Consider the following 695-residue polypeptide: UvrABC system protein B (695 aa).

The Helicase ATP-binding domain maps to 25 to 176 (KSILEGHRFQ…NQREVLRDLA (152 aa)). Residue 38–45 (GATGTGKT) coordinates ATP. The Beta-hairpin motif lies at 91 to 114 (YYDYYQPEAYVPSTDTYIAKSSSI). Residues 454–617 (LLGEIYLRLE…ITPKPIIKKN (164 aa)) enclose the Helicase C-terminal domain. The region spanning 652 to 687 (PELIGQLELKMKAAAKNLEFEEAAQLRDQIKKLRQR) is the UVR domain.

It belongs to the UvrB family. As to quaternary structure, forms a heterotetramer with UvrA during the search for lesions. Interacts with UvrC in an incision complex.

It localises to the cytoplasm. In terms of biological role, the UvrABC repair system catalyzes the recognition and processing of DNA lesions. A damage recognition complex composed of 2 UvrA and 2 UvrB subunits scans DNA for abnormalities. Upon binding of the UvrA(2)B(2) complex to a putative damaged site, the DNA wraps around one UvrB monomer. DNA wrap is dependent on ATP binding by UvrB and probably causes local melting of the DNA helix, facilitating insertion of UvrB beta-hairpin between the DNA strands. Then UvrB probes one DNA strand for the presence of a lesion. If a lesion is found the UvrA subunits dissociate and the UvrB-DNA preincision complex is formed. This complex is subsequently bound by UvrC and the second UvrB is released. If no lesion is found, the DNA wraps around the other UvrB subunit that will check the other stand for damage. The chain is UvrABC system protein B from Synechococcus sp. (strain JA-3-3Ab) (Cyanobacteria bacterium Yellowstone A-Prime).